The chain runs to 340 residues: Uridine nucleosidase (340 aa).

The active site involves His254.

The protein belongs to the IUNH family.

Its subcellular location is the cytoplasm. The protein resides in the nucleus. It carries out the reaction uridine + H2O = D-ribose + uracil. In terms of biological role, also acts on cytidine. In Saccharomyces cerevisiae (strain ATCC 204508 / S288c) (Baker's yeast), this protein is Uridine nucleosidase (URH1).